The primary structure comprises 169 residues: Ribosome maturation factor RimP (169 aa).

It belongs to the RimP family.

Its subcellular location is the cytoplasm. Required for maturation of 30S ribosomal subunits. This is Ribosome maturation factor RimP from Pseudomonas putida (strain W619).